The primary structure comprises 515 residues: MTTPYKHEPFTDFSQEENRKAFEQALGKVTETLGQTYPLVINGERIETKDQIVSINPAKKDEVVGTVSKAGKEEAEQAVQAAAKAFETWRYTSPEERASVIFRAAANIRRKKHEYSALLVKEAGKPWNEADADTAEAIDFLEYYARQMLELAKGKPVNSREGEHNQYVYTPTGVTLVIPPWNFLFAIMAGTTVAPIVTGNTVVLKPASATPVIAARFVEELEQAGLPKGVVNFVPGSGAEVGDYLVDHPKTSLITFTGSREVGTRIFERAAKVQPGQQHLKRVIAEMGGKDTVVVDEDADVELAANAIFTSAFGFSGQKCSAGSRAVVHEKLYDQVIERVKEITETKTTANPLSADVYMGPVIDQASFDKITDYIEVGKQEGRLVTGGTSDDTEGYFIHPTVFADLEPTSRLMQEEIFGPVLAFSKVSSFDEALEVANNTEYGLTGAVITNNRDHINRAKQEFHVGNLYFNRNCTGAIVGYHPFGGFKMSGTDSKAGGPDYLALHMQAKTISEMF.

Residues E286 and C320 contribute to the active site.

Belongs to the aldehyde dehydrogenase family. RocA subfamily.

It catalyses the reaction L-glutamate 5-semialdehyde + NAD(+) + H2O = L-glutamate + NADH + 2 H(+). Its pathway is amino-acid degradation; L-proline degradation into L-glutamate; L-glutamate from L-proline: step 2/2. The polypeptide is 1-pyrroline-5-carboxylate dehydrogenase (Bacillus pumilus (strain SAFR-032)).